The following is a 625-amino-acid chain: tRNA uridine 5-carboxymethylaminomethyl modification enzyme MnmG (625 aa).

Residues 9–14 (GGGHAG), Val121, and Ser177 contribute to the FAD site. 271–285 (GPRYCPSIEDKVNRF) contacts NAD(+). Gln368 serves as a coordination point for FAD.

This sequence belongs to the MnmG family. Homodimer. Heterotetramer of two MnmE and two MnmG subunits. It depends on FAD as a cofactor.

It localises to the cytoplasm. Its function is as follows. NAD-binding protein involved in the addition of a carboxymethylaminomethyl (cmnm) group at the wobble position (U34) of certain tRNAs, forming tRNA-cmnm(5)s(2)U34. In Aliarcobacter butzleri (strain RM4018) (Arcobacter butzleri), this protein is tRNA uridine 5-carboxymethylaminomethyl modification enzyme MnmG.